Reading from the N-terminus, the 560-residue chain is Cilia- and flagella-associated protein 184 (560 aa).

Residues 1–12 (MEGGSEHTKDPG) are compositionally biased toward basic and acidic residues. Positions 1 to 209 (MEGGSEHTKD…QEEGKPLGGR (209 aa)) are disordered. Composition is skewed to acidic residues over residues 41-61 (GELE…EEEA) and 101-110 (EPEEPAEAGA). Basic and acidic residues-rich tracts occupy residues 127–144 (AEAR…KEVR) and 179–209 (ETRR…LGGR). Coiled coils occupy residues 357-481 (QAAL…QGRD) and 510-536 (DSLL…LKRH).

Belongs to the CFAP184 family. As to quaternary structure, forms a complex with CFAP263; the interaction is required for functional activity in cilia.

Its subcellular location is the cell projection. It is found in the cilium. It localises to the cytoplasm. The protein resides in the cytoskeleton. The protein localises to the microtubule organizing center. Its subcellular location is the centrosome. Functionally, in complex with CFAP263, acts as a regulator of ciliary beating that connects radial spoke 3 (RS3) to the inner dynein arm (IDA) and the nexin-dynein regulatory complex (N-DRC). The complex is positioned parallel to N-DRC and forms a connection between the arch at the base of RS3, the IDA tail and N-DRC. This is Cilia- and flagella-associated protein 184 (CFAP184) from Macaca fascicularis (Crab-eating macaque).